Consider the following 316-residue polypeptide: tRNA dimethylallyltransferase (316 aa).

23 to 30 lines the ATP pocket; that stretch reads GPTASGKS. 25 to 30 provides a ligand contact to substrate; sequence TASGKS. The tract at residues 48–51 is interaction with substrate tRNA; that stretch reads DSMQ.

The protein belongs to the IPP transferase family. In terms of assembly, monomer. Mg(2+) is required as a cofactor.

The catalysed reaction is adenosine(37) in tRNA + dimethylallyl diphosphate = N(6)-dimethylallyladenosine(37) in tRNA + diphosphate. Catalyzes the transfer of a dimethylallyl group onto the adenine at position 37 in tRNAs that read codons beginning with uridine, leading to the formation of N6-(dimethylallyl)adenosine (i(6)A). In Rhodopseudomonas palustris (strain BisB18), this protein is tRNA dimethylallyltransferase.